Reading from the N-terminus, the 204-residue chain is ADP-ribosylation factor-like protein 15 (204 aa).

Residues 39 to 46 (GLTGSGKT), 82 to 86 (ELGGA), and 142 to 145 (NHQD) each bind GTP.

It belongs to the small GTPase superfamily. Arf family.

This chain is ADP-ribosylation factor-like protein 15 (ARL15), found in Pongo abelii (Sumatran orangutan).